The chain runs to 531 residues: Calcium-dependent protein kinase 21 (531 aa).

Positions 1–10 are enriched in basic residues; that stretch reads MGCFSSKHRK. The tract at residues 1–62 is disordered; sequence MGCFSSKHRK…STPSSNPVSV (62 aa). A lipid anchor (N-myristoyl glycine) is attached at glycine 2. Polar residues predominate over residues 48-60; the sequence is IHQQISTPSSNPV. A Protein kinase domain is found at 80-338; it reads YSLGKELGRG…AAQVLEHPWI (259 aa). ATP contacts are provided by residues 86 to 94 and lysine 109; that span reads LGRGQFGIT. Aspartate 204 serves as the catalytic Proton acceptor. A Phosphoserine modification is found at serine 244. The interval 343 to 373 is autoinhibitory domain; the sequence is APDKPIDSAVLSRMKQFRAMNKLKKLALKVI. 4 EF-hand domains span residues 380-415, 416-451, 452-487, and 488-522; these read EEIK…LGSR, LSET…RYKL, DRDE…YGMG, and DEAS…GSTQ. Residues aspartate 393, aspartate 395, serine 397, threonine 399, glutamate 404, aspartate 429, aspartate 431, asparagine 433, threonine 435, glutamate 440, aspartate 465, aspartate 467, serine 469, histidine 471, glutamate 476, aspartate 500, aspartate 502, aspartate 504, arginine 506, and glutamate 511 each coordinate Ca(2+).

Belongs to the protein kinase superfamily. Ser/Thr protein kinase family. CDPK subfamily. As to quaternary structure, interacts with SLAC1 and ABI1.

Its subcellular location is the cell membrane. The catalysed reaction is L-seryl-[protein] + ATP = O-phospho-L-seryl-[protein] + ADP + H(+). The enzyme catalyses L-threonyl-[protein] + ATP = O-phospho-L-threonyl-[protein] + ADP + H(+). With respect to regulation, activated by calcium. Autophosphorylation may play an important role in the regulation of the kinase activity. Its function is as follows. May play a role in signal transduction pathways that involve calcium as a second messenger. Mediates the phosphorylation and activation of the S-type anion efflux channel SLAC1. The sequence is that of Calcium-dependent protein kinase 21 (CPK21) from Arabidopsis thaliana (Mouse-ear cress).